Consider the following 123-residue polypeptide: MPRLEPGMARIRVKDLRLRTFIGIKEEEILNKQDVLINLTILYPAADAVEVNDIEHALNYRTITKAIIRHVEENRFALLERMTQEILDLVMENPAVRYAEVEVDKPHALRFAESVSITLAGHR.

It belongs to the DHNA family. Homooctamer. Dimer of tetramers.

It carries out the reaction 7,8-dihydroneopterin 3'-triphosphate = 7,8-dihydromonapterin 3'-triphosphate. Catalyzes the epimerization of carbon 2' of the side chain of 7,8-dihydroneopterin triphosphate (H2NTP) to form 7,8-dihydromonapterin triphosphate (H2MTP). Is required for tetrahydromonapterin biosynthesis. This chain is Dihydroneopterin triphosphate 2'-epimerase, found in Pseudomonas aeruginosa (strain ATCC 15692 / DSM 22644 / CIP 104116 / JCM 14847 / LMG 12228 / 1C / PRS 101 / PAO1).